The primary structure comprises 213 residues: MDTIWDISPPIAPATPVWPGDTPVGIERVWRIEAGSPVNVARVTLSPHTGAHADAPLHYDADGAPIGAVPLDAYLGRCRVIHCIGARSAVTPGHVRAALDGAPPRVLLRTYGQAPQHAWDSAFCAVAPETIDLLAAHGVRLVGIDTPSLDPQESKTMDAHRRIRAHRMAILEGLVLDEIAAGDYELIALPLKFATLDASPVRAVLRALPAAPR.

W18 is a binding site for substrate. Zn(2+)-binding residues include H48, H52, and D54. H58 serves as the catalytic Proton donor/acceptor. Residues H160 and E172 each contribute to the Zn(2+) site.

It belongs to the Cyclase 1 superfamily. KynB family. As to quaternary structure, homodimer. It depends on Zn(2+) as a cofactor.

The enzyme catalyses N-formyl-L-kynurenine + H2O = L-kynurenine + formate + H(+). Its pathway is amino-acid degradation; L-tryptophan degradation via kynurenine pathway; L-kynurenine from L-tryptophan: step 2/2. Catalyzes the hydrolysis of N-formyl-L-kynurenine to L-kynurenine, the second step in the kynurenine pathway of tryptophan degradation. The protein is Kynurenine formamidase of Burkholderia pseudomallei (strain 668).